A 140-amino-acid polypeptide reads, in one-letter code: Desampylase (140 aa).

An MPN domain is found at threonine 13–serine 133. The Proton donor/acceptor role is filled by glutamate 34. Residues histidine 88, histidine 90, and aspartate 101 each coordinate Zn(2+). Positions histidine 88–aspartate 101 match the JAMM motif motif.

It belongs to the peptidase M67B family. Exists in two major states: monomer and homodimer. Both conformational states are catalytically active. Zn(2+) serves as cofactor. The disulfide bridge probably stabilizes the PfJAMM1 homodimer at the optimal growth temperature of the hyperthermophile.

The catalysed reaction is an N(6)-[small archaeal modifier protein]-[protein]-L-lysine + H2O = a [protein]-L-lysine + a [small archaeal modifier protein].. Inhibited by EDTA in vitro. Metalloprotease that displays desampylase (DSAMP) activity, cleaving ubiquitin-like small archaeal modifier proteins (SAMP1, SAMP2 and SAMP3) from protein conjugates (isopeptide- and linear-linked). Thus, likely regulates sampylation and the pools of 'free' SAMP available for protein modification. In vitro, is also able to cleave non-physiological ubiquitin (Ub) substrates, such as 'Met1-', 'Lys48-', and 'Lys63'-linked Ub dimers (Ub2), and to remove Ub tags from diverse proteins. In Pyrococcus furiosus (strain ATCC 43587 / DSM 3638 / JCM 8422 / Vc1), this protein is Desampylase.